The following is a 254-amino-acid chain: Zinc import ATP-binding protein ZnuC (254 aa).

The region spanning 5 to 221 (ICAADLSVSH…PAYRALFGSE (217 aa)) is the ABC transporter domain. 38-45 (GPNGSGKS) provides a ligand contact to ATP. Residues 234–245 (DHDHDHVAEGHR) show a composition bias toward basic and acidic residues. Positions 234-254 (DHDHDHVAEGHRHGPACAHPH) are disordered.

It belongs to the ABC transporter superfamily. Zinc importer (TC 3.A.1.15.5) family. In terms of assembly, the complex is composed of two ATP-binding proteins (ZnuC), two transmembrane proteins (ZnuB) and a solute-binding protein (ZnuA).

The protein resides in the cell inner membrane. The catalysed reaction is Zn(2+)(out) + ATP(in) + H2O(in) = Zn(2+)(in) + ADP(in) + phosphate(in) + H(+)(in). In terms of biological role, part of the ABC transporter complex ZnuABC involved in zinc import. Responsible for energy coupling to the transport system. The protein is Zinc import ATP-binding protein ZnuC of Paracoccus denitrificans (strain Pd 1222).